Reading from the N-terminus, the 291-residue chain is ATP synthase gamma chain (291 aa).

This sequence belongs to the ATPase gamma chain family. In terms of assembly, F-type ATPases have 2 components, CF(1) - the catalytic core - and CF(0) - the membrane proton channel. CF(1) has five subunits: alpha(3), beta(3), gamma(1), delta(1), epsilon(1). CF(0) has three main subunits: a, b and c.

Its subcellular location is the cell inner membrane. Its function is as follows. Produces ATP from ADP in the presence of a proton gradient across the membrane. The gamma chain is believed to be important in regulating ATPase activity and the flow of protons through the CF(0) complex. This Aquifex aeolicus (strain VF5) protein is ATP synthase gamma chain.